Consider the following 535-residue polypeptide: CTP synthase (535 aa).

An amidoligase domain region spans residues 1-267 (MTKYIFVTGG…DQIVCDHLKL (267 aa)). Ser13 contributes to the CTP binding site. Residue Ser13 participates in UTP binding. Residue 14–19 (SLGKGI) participates in ATP binding. Residue Tyr54 participates in L-glutamine binding. Asp71 contributes to the ATP binding site. 2 residues coordinate Mg(2+): Asp71 and Glu141. CTP is bound by residues 148 to 150 (DIE), 188 to 193 (KTKPTQ), and Lys224. UTP is bound by residues 188-193 (KTKPTQ) and Lys224. Residues 292 to 534 (RIALVGKYVE…VQASITNKES (243 aa)) enclose the Glutamine amidotransferase type-1 domain. Gly354 contributes to the L-glutamine binding site. Cys381 serves as the catalytic Nucleophile; for glutamine hydrolysis. L-glutamine-binding positions include 382-385 (LGMQ), Glu405, and Arg462. Active-site residues include His507 and Glu509.

This sequence belongs to the CTP synthase family. As to quaternary structure, homotetramer.

The enzyme catalyses UTP + L-glutamine + ATP + H2O = CTP + L-glutamate + ADP + phosphate + 2 H(+). It catalyses the reaction L-glutamine + H2O = L-glutamate + NH4(+). The catalysed reaction is UTP + NH4(+) + ATP = CTP + ADP + phosphate + 2 H(+). The protein operates within pyrimidine metabolism; CTP biosynthesis via de novo pathway; CTP from UDP: step 2/2. Its activity is regulated as follows. Allosterically activated by GTP, when glutamine is the substrate; GTP has no effect on the reaction when ammonia is the substrate. The allosteric effector GTP functions by stabilizing the protein conformation that binds the tetrahedral intermediate(s) formed during glutamine hydrolysis. Inhibited by the product CTP, via allosteric rather than competitive inhibition. Catalyzes the ATP-dependent amination of UTP to CTP with either L-glutamine or ammonia as the source of nitrogen. Regulates intracellular CTP levels through interactions with the four ribonucleotide triphosphates. This chain is CTP synthase, found in Bacillus cytotoxicus (strain DSM 22905 / CIP 110041 / 391-98 / NVH 391-98).